The chain runs to 271 residues: 3-methyl-2-oxobutanoate hydroxymethyltransferase (271 aa).

The Mg(2+) site is built by Asp52 and Asp91. Residues 52–53, Asp91, and Lys121 contribute to the 3-methyl-2-oxobutanoate site; that span reads DS. A Mg(2+)-binding site is contributed by Glu123. The Proton acceptor role is filled by Glu189.

The protein belongs to the PanB family. As to quaternary structure, homodecamer; pentamer of dimers. It depends on Mg(2+) as a cofactor.

It localises to the cytoplasm. The enzyme catalyses 3-methyl-2-oxobutanoate + (6R)-5,10-methylene-5,6,7,8-tetrahydrofolate + H2O = 2-dehydropantoate + (6S)-5,6,7,8-tetrahydrofolate. It participates in cofactor biosynthesis; (R)-pantothenate biosynthesis; (R)-pantoate from 3-methyl-2-oxobutanoate: step 1/2. Its function is as follows. Catalyzes the reversible reaction in which hydroxymethyl group from 5,10-methylenetetrahydrofolate is transferred onto alpha-ketoisovalerate to form ketopantoate. The sequence is that of 3-methyl-2-oxobutanoate hydroxymethyltransferase from Acidothermus cellulolyticus (strain ATCC 43068 / DSM 8971 / 11B).